We begin with the raw amino-acid sequence, 197 residues long: Imidazoleglycerol-phosphate dehydratase (197 aa).

Belongs to the imidazoleglycerol-phosphate dehydratase family.

The protein localises to the cytoplasm. The enzyme catalyses D-erythro-1-(imidazol-4-yl)glycerol 3-phosphate = 3-(imidazol-4-yl)-2-oxopropyl phosphate + H2O. It participates in amino-acid biosynthesis; L-histidine biosynthesis; L-histidine from 5-phospho-alpha-D-ribose 1-diphosphate: step 6/9. This chain is Imidazoleglycerol-phosphate dehydratase, found in Rhodopseudomonas palustris (strain HaA2).